The following is a 701-amino-acid chain: Elongation factor G 2 (701 aa).

In terms of domain architecture, tr-type G spans 8–290 (ERYRNIGISA…AVIDYLPSPA (283 aa)). GTP-binding positions include 17 to 24 (AHIDAGKT), 88 to 92 (DTPGH), and 142 to 145 (NKMD).

This sequence belongs to the TRAFAC class translation factor GTPase superfamily. Classic translation factor GTPase family. EF-G/EF-2 subfamily.

The protein resides in the cytoplasm. In terms of biological role, catalyzes the GTP-dependent ribosomal translocation step during translation elongation. During this step, the ribosome changes from the pre-translocational (PRE) to the post-translocational (POST) state as the newly formed A-site-bound peptidyl-tRNA and P-site-bound deacylated tRNA move to the P and E sites, respectively. Catalyzes the coordinated movement of the two tRNA molecules, the mRNA and conformational changes in the ribosome. In Cupriavidus pinatubonensis (strain JMP 134 / LMG 1197) (Cupriavidus necator (strain JMP 134)), this protein is Elongation factor G 2.